Consider the following 229-residue polypeptide: Adenylate kinase (229 aa).

The propeptide occupies M1–F9. G25–T30 contacts ATP. The tract at residues S45–V74 is NMP. Residues T46, R51, G72 to V74, G100 to R103, and Q107 contribute to the AMP site. Residues G141 to D178 are LID. R142 provides a ligand contact to ATP. The AMP site is built by R175 and R186. G214 provides a ligand contact to ATP.

Belongs to the adenylate kinase family.

The protein localises to the hydrogenosome. The enzyme catalyses AMP + ATP = 2 ADP. Functionally, catalyzes the reversible transfer of the terminal phosphate group between ATP and AMP. Plays an important role in cellular energy homeostasis and in adenine nucleotide metabolism. This chain is Adenylate kinase, found in Trichomonas vaginalis.